The chain runs to 345 residues: uncharacterized protein (345 aa).

The protein resides in the cell membrane. Functionally, involved in potassium and divalent cation transport. Enhances the transport activity of the cation/potassium transporter CzcD. This is an uncharacterized protein from Bacillus subtilis (strain 168).